Here is a 327-residue protein sequence, read N- to C-terminus: Phenylalanine--tRNA ligase alpha subunit (327 aa).

E252 provides a ligand contact to Mg(2+).

The protein belongs to the class-II aminoacyl-tRNA synthetase family. Phe-tRNA synthetase alpha subunit type 1 subfamily. Tetramer of two alpha and two beta subunits. Mg(2+) serves as cofactor.

Its subcellular location is the cytoplasm. It catalyses the reaction tRNA(Phe) + L-phenylalanine + ATP = L-phenylalanyl-tRNA(Phe) + AMP + diphosphate + H(+). This chain is Phenylalanine--tRNA ligase alpha subunit, found in Shewanella oneidensis (strain ATCC 700550 / JCM 31522 / CIP 106686 / LMG 19005 / NCIMB 14063 / MR-1).